The primary structure comprises 465 residues: E3 ubiquitin-protein ligase TRIM15 (465 aa).

Residues 16-61 (CTLCVGPLEDAVTAPCGHTFCRLCLPTLSQMGAQSSGKILLCPLCQ) form an RING-type zinc finger. A B box-type zinc finger spans residues 78 to 119 (LGETYCEEHGEKIYFFCENDAEFLCVFCREGPTHQAHTVGFL). Zn(2+) is bound by residues C83, H86, C105, and H111. The stretch at 126–229 (YRDRLRSRLE…VKELEEKCQQ (104 aa)) forms a coiled coil. Positions 276-465 (EMMRMFSENL…KKGSCLTLKG (190 aa)) constitute a B30.2/SPRY domain.

It belongs to the TRIM/RBCC family. As to quaternary structure, interacts with paxillin/PXN; this interaction recruits TRIM15 to focal adhesions. Interacts with TRIM8; this interaction prevents TRIM8 cytoplasmic translocation.

It is found in the cytoplasm. The protein localises to the nucleus. It localises to the cell junction. The protein resides in the focal adhesion. The enzyme catalyses S-ubiquitinyl-[E2 ubiquitin-conjugating enzyme]-L-cysteine + [acceptor protein]-L-lysine = [E2 ubiquitin-conjugating enzyme]-L-cysteine + N(6)-ubiquitinyl-[acceptor protein]-L-lysine.. Functionally, E3 ubiquitin ligase that plays a role in several processes including innate antiviral immnity, cell migration and chemotaxis. Acts as a 'Lys-63'-specific ubiquitin ligase for MAPK1/ERK2 and MAPK3/ERK1, promoting their activation by facilitating their interaction with MAP2K1 and MAP2K2. Also plays a role in cell migration and chemotaxis by acting as a stable focal adhesion component upon recruitment by multi-adapter protein paxillin/PXN. Functions in the RIGI-mediated interferon induction pathway upstream or at the level of MAVS. Inhibits NF-kappa-B activation by turnover of 'Lys-63'-linked ubiquitination of MAP3K7/TAK1. Mechanistically, prevents TRIM8 cytoplasmic translocation and thus inhibits TRIM8-mediated 'Lys-63'-linked polyubiquitination of MAP3K7/TAK1 in the cytoplasm. Also has an important regulatory effect on the activation of hepatic stellate cells (HSCs). In Macaca mulatta (Rhesus macaque), this protein is E3 ubiquitin-protein ligase TRIM15 (TRIM15).